Here is a 278-residue protein sequence, read N- to C-terminus: Urease accessory protein UreD (278 aa).

This sequence belongs to the UreD family. In terms of assembly, ureD, UreF and UreG form a complex that acts as a GTP-hydrolysis-dependent molecular chaperone, activating the urease apoprotein by helping to assemble the nickel containing metallocenter of UreC. The UreE protein probably delivers the nickel.

It localises to the cytoplasm. Functionally, required for maturation of urease via the functional incorporation of the urease nickel metallocenter. The sequence is that of Urease accessory protein UreD from Leptothrix cholodnii (strain ATCC 51168 / LMG 8142 / SP-6) (Leptothrix discophora (strain SP-6)).